We begin with the raw amino-acid sequence, 69 residues long: DNA gyrase inhibitor YacG (69 aa).

4 residues coordinate Zn(2+): C13, C16, C32, and C36.

This sequence belongs to the DNA gyrase inhibitor YacG family. In terms of assembly, interacts with GyrB. Zn(2+) is required as a cofactor.

Inhibits all the catalytic activities of DNA gyrase by preventing its interaction with DNA. Acts by binding directly to the C-terminal domain of GyrB, which probably disrupts DNA binding by the gyrase. The sequence is that of DNA gyrase inhibitor YacG from Neisseria meningitidis serogroup A / serotype 4A (strain DSM 15465 / Z2491).